We begin with the raw amino-acid sequence, 283 residues long: MSATMRETGWAKINLALHVRARRADGYHDIETLFAFVDGGDTIEAALAATDTLVIDGEFAEGLSSGADNLVLRVLALLRARYGADRVPPLAVRLTKRLPLAAGIGGGSADAAAMARLVRTHFLPELGDATLARIVGPLGADIAACVASTTCMGSGTGEDLHAVAGLRIAGVPVLLVNPRQPVATGPVFAAWDGIDRGPLYIGTDYRAQLIGARNDLQRPALAACPAISDILLELGALRPWLARMSGSGATCFALFDAAADRDAAKAVLAARHPGWWLMAGALR.

Lys12 is an active-site residue. Residue Pro99 to Ala109 coordinates ATP. Residue Asp141 is part of the active site.

Belongs to the GHMP kinase family. IspE subfamily.

The enzyme catalyses 4-CDP-2-C-methyl-D-erythritol + ATP = 4-CDP-2-C-methyl-D-erythritol 2-phosphate + ADP + H(+). Its pathway is isoprenoid biosynthesis; isopentenyl diphosphate biosynthesis via DXP pathway; isopentenyl diphosphate from 1-deoxy-D-xylulose 5-phosphate: step 3/6. Functionally, catalyzes the phosphorylation of the position 2 hydroxy group of 4-diphosphocytidyl-2C-methyl-D-erythritol. This chain is 4-diphosphocytidyl-2-C-methyl-D-erythritol kinase, found in Sphingopyxis alaskensis (strain DSM 13593 / LMG 18877 / RB2256) (Sphingomonas alaskensis).